The following is a 415-amino-acid chain: Methylthioribose-1-phosphate isomerase (415 aa).

Catalysis depends on Asp-284, which acts as the Proton donor.

It belongs to the eIF-2B alpha/beta/delta subunits family. MtnA subfamily.

Its subcellular location is the cytoplasm. It is found in the nucleus. The enzyme catalyses 5-(methylsulfanyl)-alpha-D-ribose 1-phosphate = 5-(methylsulfanyl)-D-ribulose 1-phosphate. The protein operates within amino-acid biosynthesis; L-methionine biosynthesis via salvage pathway; L-methionine from S-methyl-5-thio-alpha-D-ribose 1-phosphate: step 1/6. Its function is as follows. Catalyzes the interconversion of methylthioribose-1-phosphate (MTR-1-P) into methylthioribulose-1-phosphate (MTRu-1-P). In Vanderwaltozyma polyspora (strain ATCC 22028 / DSM 70294 / BCRC 21397 / CBS 2163 / NBRC 10782 / NRRL Y-8283 / UCD 57-17) (Kluyveromyces polysporus), this protein is Methylthioribose-1-phosphate isomerase.